The following is a 1067-amino-acid chain: Probable importin-5 homolog (1067 aa).

24 HEAT repeats span residues L3–H34, S42–I75, F93–P120, P125–A152, A164–I197, V206–Y243, N251–F286, L295–S347, G349–S381, E385–L425, R427–I466, P468–I508, E510–V553, K555–L596, E598–L658, H661–H703, F718–G757, A763–F826, P832–G869, Y876–N909, F917–L960, P969–R999, Q1008–R1040, and S1041–F1064.

The protein belongs to the importin beta family. Importin beta-3 subfamily.

The protein localises to the cytoplasm. It is found in the nucleus. Its function is as follows. Functions in nuclear protein import as nuclear transport receptor. Serves as receptor for nuclear localization signals (NLS) in cargo substrates. The protein is Probable importin-5 homolog of Dictyostelium discoideum (Social amoeba).